The chain runs to 290 residues: MASIKEIKTQITSVVNTKKITKAMEMVAISKMRKTEERMSSGRPYSEIIRKVINHVAQGHLEYKHSYLETRKIKRIGLIIVSSDRGLCGSLNSNLFRKVLFKIQNFTQKNIPCDLILFGLKSLPVFKLCENNILSKITHLGEHPNILKVINGIDVLLKKYQIKRIDKIFIAYNEFHNKMSQYPKIIQLLPLSRIKSETISTKRWDYLYESESKLIIDSLFKRYIESQVYQSILENIASEHAARMMAMKTATENSTERIKELKLLYNKVRQATITQELTEIIAGASAVSTG.

It belongs to the ATPase gamma chain family. F-type ATPases have 2 components, CF(1) - the catalytic core - and CF(0) - the membrane proton channel. CF(1) has five subunits: alpha(3), beta(3), gamma(1), delta(1), epsilon(1). CF(0) has three main subunits: a, b and c.

The protein localises to the cell membrane. Produces ATP from ADP in the presence of a proton gradient across the membrane. The gamma chain is believed to be important in regulating ATPase activity and the flow of protons through the CF(0) complex. This chain is ATP synthase gamma chain, found in Buchnera aphidicola subsp. Diuraphis noxia.